Consider the following 125-residue polypeptide: Small ribosomal subunit protein bS6 (125 aa).

The protein belongs to the bacterial ribosomal protein bS6 family.

In terms of biological role, binds together with bS18 to 16S ribosomal RNA. This chain is Small ribosomal subunit protein bS6, found in Campylobacter jejuni subsp. jejuni serotype O:23/36 (strain 81-176).